Reading from the N-terminus, the 192-residue chain is Phosphoheptose isomerase (192 aa).

Positions 37 to 192 constitute an SIS domain; that stretch reads LADSFKAGGK…IQLIEKEMVK (156 aa). Substrate is bound at residue 52 to 54; the sequence is NGG. Zn(2+) is bound by residues histidine 61 and glutamate 65. Substrate is bound by residues glutamate 65, 93–94, 119–121, serine 124, and glutamine 172; these read ND and STS. Zn(2+) contacts are provided by glutamine 172 and histidine 180.

This sequence belongs to the SIS family. GmhA subfamily. In terms of assembly, homotetramer. It depends on Zn(2+) as a cofactor.

It localises to the cytoplasm. It catalyses the reaction 2 D-sedoheptulose 7-phosphate = D-glycero-alpha-D-manno-heptose 7-phosphate + D-glycero-beta-D-manno-heptose 7-phosphate. Its pathway is carbohydrate biosynthesis; D-glycero-D-manno-heptose 7-phosphate biosynthesis; D-glycero-alpha-D-manno-heptose 7-phosphate and D-glycero-beta-D-manno-heptose 7-phosphate from sedoheptulose 7-phosphate: step 1/1. Catalyzes the isomerization of sedoheptulose 7-phosphate in D-glycero-D-manno-heptose 7-phosphate. The polypeptide is Phosphoheptose isomerase (Enterobacter sp. (strain 638)).